Consider the following 83-residue polypeptide: MSDKIRLLEGKVSSVAMDKTVVVRAERYVKHPLYGKFVKKTTKYYVHDENNECKEGDVIKFKETRPYSKTKKWCLVDIIHREK.

It belongs to the universal ribosomal protein uS17 family. Part of the 30S ribosomal subunit.

In terms of biological role, one of the primary rRNA binding proteins, it binds specifically to the 5'-end of 16S ribosomal RNA. The sequence is that of Small ribosomal subunit protein uS17 from Francisella tularensis subsp. tularensis (strain FSC 198).